We begin with the raw amino-acid sequence, 217 residues long: Tegument protein BKRF4 (217 aa).

A disordered region spans residues 1-217 (MAMFLKSRGV…GNNNYNWPWL (217 aa)). Residues 32–42 (YTLGSQASQSI) show a composition bias toward polar residues. Residues 43-79 (QEEDVSDTDESDYSDEDEEIDLEEEYPSDEDPSEGSD) show a composition bias toward acidic residues. The interaction with host histones H3/H4 stretch occupies residues 63–64 (DL). The interaction with host H2A/H2B stretch occupies residues 81 to 84 (DPSW). Residues 89–102 (SDESDYSESDEDEA) are compositionally biased toward acidic residues. Residues 106 to 132 (SQASRSSRVSPSTQQSSGLTPTPSFSR) show a composition bias toward low complexity. The segment covering 136–145 (RAPPRPPAPA) has biased composition (pro residues). The span at 208–217 (GNNNYNWPWL) shows a compositional bias: polar residues.

The protein belongs to the lymphocryptovirus BKRF4 family. In terms of assembly, forms a complex with the host H3/H4 dimer and histone chaperone ASF1. Also forms a complex with host H2A/H2B dimer. Interacts (via C-terminus) with BGLF2; this interaction is important for infectious virion production.

It localises to the virion tegument. It is found in the host nucleus. Its subcellular location is the host cytoplasm. The protein localises to the host perinuclear region. Its function is as follows. Histone-binding protein that binds to histones H2A/H2B, H3/H4 and cellular chromatin to overcome the host DNA damage response triggered by the viral genome ends. Interferes with histone ubiquitination and recruitment of repair proteins. This is Tegument protein BKRF4 from Epstein-Barr virus (strain AG876) (HHV-4).